Reading from the N-terminus, the 102-residue chain is Small ribosomal subunit protein uS10 (102 aa).

This sequence belongs to the universal ribosomal protein uS10 family. Part of the 30S ribosomal subunit.

In terms of biological role, involved in the binding of tRNA to the ribosomes. In Clostridium botulinum (strain ATCC 19397 / Type A), this protein is Small ribosomal subunit protein uS10.